The following is a 260-amino-acid chain: Ribonuclease HII (260 aa).

One can recognise an RNase H type-2 domain in the interval 75 to 260 (ELIAGVDEVG…FEPIKSIIKK (186 aa)). A divalent metal cation-binding residues include Asp81, Glu82, and Asp173.

Belongs to the RNase HII family. Requires Mn(2+) as cofactor. It depends on Mg(2+) as a cofactor.

The protein resides in the cytoplasm. The enzyme catalyses Endonucleolytic cleavage to 5'-phosphomonoester.. Functionally, endonuclease that specifically degrades the RNA of RNA-DNA hybrids. The polypeptide is Ribonuclease HII (Streptococcus thermophilus (strain CNRZ 1066)).